Consider the following 338-residue polypeptide: Glycerol-3-phosphate dehydrogenase [NAD(P)+] (338 aa).

2 residues coordinate NADPH: Trp20 and Lys110. Sn-glycerol 3-phosphate is bound by residues Lys110, Gly141, and Ser143. Ala145 contacts NADPH. Sn-glycerol 3-phosphate is bound by residues Lys197, Asp250, Ser260, Arg261, and Asn262. Lys197 functions as the Proton acceptor in the catalytic mechanism. Residue Arg261 coordinates NADPH. Glu287 contributes to the NADPH binding site.

It belongs to the NAD-dependent glycerol-3-phosphate dehydrogenase family.

Its subcellular location is the cytoplasm. The enzyme catalyses sn-glycerol 3-phosphate + NAD(+) = dihydroxyacetone phosphate + NADH + H(+). It carries out the reaction sn-glycerol 3-phosphate + NADP(+) = dihydroxyacetone phosphate + NADPH + H(+). It participates in membrane lipid metabolism; glycerophospholipid metabolism. Its function is as follows. Catalyzes the reduction of the glycolytic intermediate dihydroxyacetone phosphate (DHAP) to sn-glycerol 3-phosphate (G3P), the key precursor for phospholipid synthesis. This chain is Glycerol-3-phosphate dehydrogenase [NAD(P)+], found in Aster yellows witches'-broom phytoplasma (strain AYWB).